The sequence spans 44 residues: Viresin (44 aa).

The protein belongs to the insect A10/OS-D protein family.

It is found in the secreted. Its function is as follows. Has antibacterial activity against the Gram-negative bacteria E.coli and E.cloacae, but not against the Gram-negative bacteria P.aeruginosa, P.vulgaris, K.pneumoniae and S.enteritidis or the Gram-positive bacteria S.aureus, S.epidermidis and S.salivarius. The sequence is that of Viresin from Heliothis virescens (Tobacco budworm moth).